We begin with the raw amino-acid sequence, 242 residues long: Serine hydrolase cnsH (242 aa).

Catalysis depends on charge relay system residues Ser56, Asp138, and His216.

Belongs to the AB hydrolase 3 family.

It participates in alkaloid biosynthesis. Its function is as follows. Serine hydrolase; part of the gene cluster that mediates the biosynthesis of communesins, a prominent class of indole alkaloids with great potential as pharmaceuticals. Communesins are biosynthesized by the coupling of tryptamine and aurantioclavine, two building blocks derived from L-tryptophan. The L-tryptophan decarboxylase cnsB converts L-tryptophan to tryptamine, whereas the tryptophan dimethylallyltransferase cnsF converts L-tryptophan to 4-dimethylallyl tryptophan which is further transformed to aurantioclavine by the aurantioclavine synthase cnsA, probably aided by the catalase cnsD. The cytochrome P450 monooxygenase cnsC catalyzes the heterodimeric coupling between the two different indole moieties, tryptamine and aurantioclavine, to construct vicinal quaternary stereocenters and yield the heptacyclic communesin scaffold. The O-methyltransferase cnsE then methylates the communesin scaffold to produce communesin K, the simplest characterized communesin that contains the heptacyclic core. The dioxygenase cnsJ converts communesin K into communesin I. Acylation to introduce the hexadienyl group at position N16 of communesin I by the acyltransferase cnsK leads to the production of communesin B. The hexadienyl group is produced by the highly reducing polyketide synthase cnsI, before being hydrolytically removed from cnsI by the serine hydrolase cnsH, converted into hexadienyl-CoA by the CoA ligase cnsG, and then transferred to communesin I by cnsK. Surprisingly, cnsK may also be a promiscuous acyltransferase that can tolerate a range of acyl groups, including acetyl-, propionyl-, and butyryl-CoA, which lead to communesins A, G and H respectively. The roles of the alpha-ketoglutarate-dependent dioxygenases cnsM and cnsP have still to be determined. The polypeptide is Serine hydrolase cnsH (Penicillium expansum (Blue mold rot fungus)).